A 1542-amino-acid polypeptide reads, in one-letter code: Pleiotropic ABC efflux transporter of multiple drugs PDH1 (1542 aa).

The span at 1-14 shows a compositional bias: low complexity; the sequence is MNTPDDSSVSSVDS. Residues 1-61 are disordered; it reads MNTPDDSSVS…APADGSAPLD (61 aa). Over 1–517 the chain is Cytoplasmic; that stretch reads MNTPDDSSVS…LIRNFWRIKN (517 aa). Positions 24–33 are enriched in basic and acidic residues; sequence NVEKRIRELA. Over residues 35–47 the composition is skewed to polar residues; sequence SLTQQSLTSSNRS. An ABC transporter 1 domain is found at 153–409; that stretch reads VKLLNAVWRK…FQKMGYFCPK (257 aa). Transmembrane regions (helical) follow at residues 518–540, 552–574, 603–625, 634–652, 662–684, and 773–792; these read SASV…GSMF, FYFR…LLEI, VISE…YFLV, FFFY…SHLF, LQEA…GFAI, and GFGV…LILC. The Cytoplasmic portion of the chain corresponds to 793 to 1220; the sequence is EFNEGAKQKG…LFQQYWRTPD (428 aa). Residues 825–834 show a composition bias toward basic and acidic residues; the sequence is TKMHTDKNDI. Residues 825-846 are disordered; that stretch reads TKMHTDKNDIENNSESITSNAT. Positions 835–846 are enriched in polar residues; that stretch reads ENNSESITSNAT. The 244-residue stretch at 885–1128 folds into the ABC transporter 2 domain; the sequence is FHWQNLCYDV…MIKYFEDHGA (244 aa). Residue 921 to 928 coordinates ATP; the sequence is GASGAGKT. 6 consecutive transmembrane segments (helical) span residues 1221 to 1241, 1256 to 1276, 1296 to 1316, 1342 to 1362, 1370 to 1390, and 1495 to 1515; these read YLWS…FTFF, SIFM…PTFV, AFIL…GTLA, LFWL…LFVI, TAAH…GVMA, and GIFI…YWLA. Residues 1516-1542 lie on the Cytoplasmic side of the membrane; sequence RVPKTNGKIAKNGKTAKVNFIRRLIPF.

This sequence belongs to the ABC transporter superfamily. ABCG family. PDR (TC 3.A.1.205) subfamily. In terms of processing, phosphorylated by PKA. Dephosphorylated on glucose depletion and independently rephosphorylated during glucose exposure or under stress.

The protein resides in the cell membrane. In terms of biological role, pleiotropic ABC efflux transporter that confers resistance to structurally and functionally unrelated compounds including caspofungin or azoles such as fluconazole, itraconazole, posaconazole, voriconazole, and isavuconazole. Does not play a role in the azole resistance in mature biofilms. This Candida glabrata (strain ATCC 2001 / BCRC 20586 / JCM 3761 / NBRC 0622 / NRRL Y-65 / CBS 138) (Yeast) protein is Pleiotropic ABC efflux transporter of multiple drugs PDH1.